The chain runs to 224 residues: UPF0758 protein RSc2444 (224 aa).

An MPN domain is found at 102-224 (TLESPQSVKD…VYSFLEHGKM (123 aa)). Positions 173, 175, and 186 each coordinate Zn(2+). Residues 173–186 (HNHPTGHVEPSESD) carry the JAMM motif motif.

The protein belongs to the UPF0758 family.

The sequence is that of UPF0758 protein RSc2444 from Ralstonia nicotianae (strain ATCC BAA-1114 / GMI1000) (Ralstonia solanacearum).